A 509-amino-acid polypeptide reads, in one-letter code: Dol-P-Glc:Glc(2)Man(9)GlcNAc(2)-PP-Dol alpha-1,2-glucosyltransferase (509 aa).

The Cytoplasmic segment spans residues 1–4 (MGKL). A helical membrane pass occupies residues 5–25 (AVAAITSLWVIPMSIIVNHIV). The Lumenal segment spans residues 26–57 (PEPYMDEIFHVPQAQQYCNGNFRSWDPMITTP). A helical membrane pass occupies residues 58-78 (PGLYYLSLAHVASLFPGMLLM). At 79-99 (ENTSQSFSEACSTSVLRSTNA) the chain is on the cytoplasmic side. The chain crosses the membrane as a helical span at residues 100 to 120 (VSAVLCGVLVYEIIRFLGPNL). Residues 121–124 (SDRK) are Lumenal-facing. Residues 125–145 (ATFMALVMSLYPLHWFFTFLY) traverse the membrane as a helical segment. The Cytoplasmic portion of the chain corresponds to 146-170 (YTDVASLTAVLAMYLTCLKRRYVLS). A helical membrane pass occupies residues 171 to 191 (ALFGTLAVFIRQTNVVWMLFV). Topologically, residues 192-285 (ACSGILDFTL…KWRILIKFSP (94 aa)) are lumenal. The tract at residues 210-254 (QEVNQELHQSSNKKGATLRSNLRKRKSDISSDTSDPFNHGQTVPS) is disordered. Polar residues-rich tracts occupy residues 215 to 229 (ELHQSSNKKGATLRS) and 239 to 254 (SSDTSDPFNHGQTVPS). The helical transmembrane segment at 286 to 306 (FIFVVVAFGIFILWNGGIVLG) threads the bilayer. The Cytoplasmic segment spans residues 307–311 (AKEAH). A helical transmembrane segment spans residues 312-332 (VVSLHFAQIMYFSLVSALFTA). Residues 333 to 355 (PLHFSVNQLRHQFHQLHRNWSLS) are Lumenal-facing. A glycan (N-linked (GlcNAc...) asparagine) is linked at Asn-351. Residues 356–376 (LILTLVALVAGFVSVHFFSLA) traverse the membrane as a helical segment. Residues 377–400 (HPYLLADNRHYPFYLWRKIINAHW) lie on the Cytoplasmic side of the membrane. Residues 401 to 421 (LMKYILVPVYVYSWFSILTLL) form a helical membrane-spanning segment. Over 422–428 (AKTRRQT) the chain is Lumenal. The chain crosses the membrane as a helical span at residues 429-449 (WILVYFLATCGVLVPTPLIEF). Over 450-472 (RYYTIPFYLFMLHSCVRSSSFAT) the chain is Cytoplasmic. The chain crosses the membrane as a helical span at residues 473-493 (WLLIGTIFVSINVFTMAMFLF). Residues 494–509 (RPFKWSHEDGVQRFIW) lie on the Lumenal side of the membrane.

It belongs to the ALG10 glucosyltransferase family.

Its subcellular location is the endoplasmic reticulum membrane. The catalysed reaction is an alpha-D-Glc-(1-&gt;3)-alpha-D-Glc-(1-&gt;3)-alpha-D-Man-(1-&gt;2)-alpha-D-Man-(1-&gt;2)-alpha-D-Man-(1-&gt;3)-[alpha-D-Man-(1-&gt;2)-alpha-D-Man-(1-&gt;3)-[alpha-D-Man-(1-&gt;2)-alpha-D-Man-(1-&gt;6)]-alpha-D-Man-(1-&gt;6)]-beta-D-Man-(1-&gt;4)-beta-D-GlcNAc-(1-&gt;4)-alpha-D-GlcNAc-diphospho-di-trans,poly-cis-dolichol + a di-trans,poly-cis-dolichyl beta-D-glucosyl phosphate = a alpha-D-Glc-(1-&gt;2)-alpha-D-Glc-(1-&gt;3)-alpha-D-Glc-(1-&gt;3)-alpha-D-Man-(1-&gt;2)-alpha-D-Man-(1-&gt;2)-alpha-D-Man-(1-&gt;3)-[alpha-D-Man-(1-&gt;2)-alpha-D-Man-(1-&gt;3)-[alpha-D-Man-(1-&gt;2)-alpha-D-Man-(1-&gt;6)]-alpha-D-Man-(1-&gt;6)]-beta-D-Man-(1-&gt;4)-beta-D-GlcNAc-(1-&gt;4)-alpha-D-GlcNAc-diphospho-di-trans,poly-cis-dolichol + a di-trans,poly-cis-dolichyl phosphate + H(+). It participates in protein modification; protein glycosylation. In terms of biological role, dol-P-Glc:Glc(2)Man(9)GlcNAc(2)-PP-Dol alpha-1,2-glucosyltransferase that operates in the biosynthetic pathway of dolichol-linked oligosaccharides, the glycan precursors employed in protein asparagine (N)-glycosylation. The assembly of dolichol-linked oligosaccharides begins on the cytosolic side of the endoplasmic reticulum membrane and finishes in its lumen. The sequential addition of sugars to dolichol pyrophosphate produces dolichol-linked oligosaccharides containing fourteen sugars, including two GlcNAcs, nine mannoses and three glucoses. Once assembled, the oligosaccharide is transferred from the lipid to nascent proteins by oligosaccharyltransferases. In the lumen of the endoplasmic reticulum, adds the third and last glucose residue from dolichyl phosphate glucose (Dol-P-Glc) onto the lipid-linked oligosaccharide intermediate Glc(2)Man(9)GlcNAc(2)-PP-Dol to produce Glc(3)Man(9)GlcNAc(2)-PP-Dol. The protein is Dol-P-Glc:Glc(2)Man(9)GlcNAc(2)-PP-Dol alpha-1,2-glucosyltransferase of Arabidopsis thaliana (Mouse-ear cress).